We begin with the raw amino-acid sequence, 102 residues long: Small ribosomal subunit protein uS10 (102 aa).

This sequence belongs to the universal ribosomal protein uS10 family. Part of the 30S ribosomal subunit.

Functionally, involved in the binding of tRNA to the ribosomes. The chain is Small ribosomal subunit protein uS10 from Bifidobacterium longum (strain DJO10A).